Reading from the N-terminus, the 424-residue chain is S-phase kinase-associated protein 2 (424 aa).

The segment at M1–D220 is mediates interaction with hepatitis C virus non-structural protein NS5A. The segment at S39–K73 is disordered. At S64 the chain carries Phosphoserine. Positions R67 to K73 match the Nuclear localization signal motif. K68 and K71 each carry N6-acetyllysine; by p300/EP300. Phosphoserine is present on residues S72 and S75. Positions G94–L140 constitute an F-box domain. LRR repeat units follow at residues V151–E176, H177–Q204, N210–R234, L235–R257, L258–T284, T286–R308, C309–E330, L334–L356, I359–L378, and K380–I401. S179 bears the Phosphoserine mark. A mediates interaction with IFI27 region spans residues G402–L424.

As to quaternary structure, part of a SCF(SKP2) complex consisting of CUL1, RBX1, SKP1 and SKP2. Component of a SCF(SKP2)-like complex containing CUL1, SKP1, TRIM21 and SKP2. Interacts directly with CUL1 and SKP1. Interacts with CKS1. Interacts with ASB2 which is the substrate-recognition component of a probable ECS E3 ubiquitin-protein ligase complex; ASB2 is likely to bridge the formation of dimeric E3-ubiquitin-protein ligase complexes composed of an ECS complex and an SCF(SKP2) complex. Interacts with the cyclin-A-CDK2 complex. Interacts with ORC1, phosphorylated CDT1, phosphorylated RBL2, ELF4, phosphorylated RAG2, FOXO1, UBP43, MYC, TOB1, TAL1 and KMT2A/MLL1. Interacts with TRIM21. Interacts with cyclin-E. Interacts with IFI27; promotes the ubiquitin-mediated proteasomal degradation of hepatitis C virus/HCV non-structural protein NS5A. Interacts with CARM1. (Microbial infection) Interacts with hepatitis C virus/HCV non-structural protein NS5A; promotes the ubiquitin-mediated proteasomal degradation of NS5A. Post-translationally, phosphorylated on serine and threonine resudues in response to DNA damage, promoting 'Lys-63'-linked ubiquitination of NBN. In terms of processing, ubiquitinated by the APC/C complex, leading to its degradation by the proteasome. Deubiquitinated by USP13. Acetylation at Lys-68 and Lys-71 increases stability through impairment of APC/C-mediated proteolysis and promotes cytoplasmic retention. Deacetylated by SIRT3.

It is found in the cytoplasm. The protein localises to the nucleus. The protein operates within protein modification; protein ubiquitination. Its function is as follows. Substrate recognition component of a SCF (SKP1-CUL1-F-box protein) E3 ubiquitin-protein ligase complex which mediates the ubiquitination and subsequent proteasomal degradation of target proteins involved in cell cycle progression, signal transduction and transcription. Specifically recognizes phosphorylated CDKN1B/p27kip and is involved in regulation of G1/S transition. Degradation of CDKN1B/p27kip also requires CKS1. Recognizes target proteins ORC1, CDT1, RBL2, KMT2A/MLL1, CDK9, RAG2, NBN, FOXO1, UBP43, YTHDF2, and probably MYC, TOB1 and TAL1. Degradation of TAL1 also requires STUB1. Recognizes CDKN1A in association with CCNE1 or CCNE2 and CDK2. Promotes ubiquitination and destruction of CDH1 in a CK1-dependent manner, thereby regulating cell migration. Following phosphorylation in response to DNA damage, mediates 'Lys-63'-linked ubiquitination of NBN, promoting ATM recruitment to DNA damage sites and DNA repair via homologous recombination. Through the ubiquitin-mediated proteasomal degradation of hepatitis C virus non-structural protein 5A, has an antiviral activity towards that virus. This chain is S-phase kinase-associated protein 2 (SKP2), found in Homo sapiens (Human).